The primary structure comprises 159 residues: Endoribonuclease YbeY (159 aa).

Zn(2+) contacts are provided by histidine 124, histidine 128, and histidine 134.

Belongs to the endoribonuclease YbeY family. It depends on Zn(2+) as a cofactor.

The protein resides in the cytoplasm. In terms of biological role, single strand-specific metallo-endoribonuclease involved in late-stage 70S ribosome quality control and in maturation of the 3' terminus of the 16S rRNA. The polypeptide is Endoribonuclease YbeY (Halalkalibacterium halodurans (strain ATCC BAA-125 / DSM 18197 / FERM 7344 / JCM 9153 / C-125) (Bacillus halodurans)).